The chain runs to 229 residues: Ribulose-phosphate 3-epimerase (229 aa).

S12 serves as a coordination point for substrate. H37, D39, and H70 together coordinate a divalent metal cation. D39 (proton acceptor) is an active-site residue. Residues H70, G146–G149, D181–G183, and A203–S204 each bind substrate. D181 serves as a coordination point for a divalent metal cation. D181 serves as the catalytic Proton donor.

This sequence belongs to the ribulose-phosphate 3-epimerase family. A divalent metal cation is required as a cofactor.

The enzyme catalyses D-ribulose 5-phosphate = D-xylulose 5-phosphate. It functions in the pathway carbohydrate degradation. Catalyzes the reversible epimerization of D-ribulose 5-phosphate to D-xylulose 5-phosphate. The sequence is that of Ribulose-phosphate 3-epimerase from Chlamydia pneumoniae (Chlamydophila pneumoniae).